A 381-amino-acid polypeptide reads, in one-letter code: Acetylornithine deacetylase (381 aa).

His79 contributes to the Zn(2+) binding site. Asp81 is an active-site residue. Residue Asp111 participates in Zn(2+) binding. The active site involves Glu143. Zn(2+) contacts are provided by Glu144, Glu168, and His354.

The protein belongs to the peptidase M20A family. ArgE subfamily. In terms of assembly, homodimer. Zn(2+) serves as cofactor. It depends on Co(2+) as a cofactor. Requires glutathione as cofactor.

Its subcellular location is the cytoplasm. The catalysed reaction is N(2)-acetyl-L-ornithine + H2O = L-ornithine + acetate. Its pathway is amino-acid biosynthesis; L-arginine biosynthesis; L-ornithine from N(2)-acetyl-L-ornithine (linear): step 1/1. In terms of biological role, catalyzes the hydrolysis of the amide bond of N(2)-acetylated L-amino acids. Cleaves the acetyl group from N-acetyl-L-ornithine to form L-ornithine, an intermediate in L-arginine biosynthesis pathway, and a branchpoint in the synthesis of polyamines. The protein is Acetylornithine deacetylase of Buchnera aphidicola subsp. Acyrthosiphon pisum (strain 5A).